Reading from the N-terminus, the 975-residue chain is Probable dipeptidyl-aminopeptidase B (975 aa).

Basic and acidic residues predominate over residues 1–20; that stretch reads MAEHGHNMWEEEPSKGRDSL. Residues 1–111 are disordered; that stretch reads MAEHGHNMWE…LSAASGSAGK (111 aa). Over 1-125 the chain is Cytoplasmic; that stretch reads MAEHGHNMWE…YRMMDRGLRR (125 aa). Residues 22-31 show a composition bias toward low complexity; that stretch reads SDSSASTTSL. The span at 68-84 shows a compositional bias: acidic residues; sequence LDDEDPLKDEASGDYDL. A helical; Signal-anchor for type II membrane protein membrane pass occupies residues 126–146; sequence VLIIASLVFVTAWVGGLFIYI. Over 147-975 the chain is Vacuolar; sequence SHKSYLHGSE…IDNAKPQGKR (829 aa). Residues asparagine 207, asparagine 397, and asparagine 622 are each glycosylated (N-linked (GlcNAc...) asparagine). The Charge relay system role is filled by serine 826. Asparagine 885 is a glycosylation site (N-linked (GlcNAc...) asparagine). Residues aspartate 903 and histidine 936 each act as charge relay system in the active site.

Belongs to the peptidase S9B family.

The protein resides in the vacuole membrane. The catalysed reaction is Release of an N-terminal dipeptide, Xaa-Yaa-|-Zaa-, from a polypeptide, preferentially when Yaa is Pro, provided Zaa is neither Pro nor hydroxyproline.. In terms of biological role, type IV dipeptidyl-peptidase which removes N-terminal dipeptides sequentially from polypeptides having unsubstituted N-termini provided that the penultimate residue is proline. This Grosmannia clavigera (strain kw1407 / UAMH 11150) (Blue stain fungus) protein is Probable dipeptidyl-aminopeptidase B (DAPB).